The chain runs to 151 residues: MEEYVIYTDGACLGNPGPGGWAAVIIQRGTNEKIISGREADSTNNKMELLAVIKALESFEQKGKRVTVYTDSTYVYKGITAWIESWMKNKWRNSSGGAVKNKEMWVRLHGIAAAHTVRWLWVKAHNGDHYNEIVDRVARKEAASFTNCEPE.

In terms of domain architecture, RNase H type-1 spans 1–143 (MEEYVIYTDG…VDRVARKEAA (143 aa)). 4 residues coordinate Mg(2+): aspartate 9, glutamate 48, aspartate 71, and aspartate 135.

Belongs to the RNase H family. Monomer. Requires Mg(2+) as cofactor.

The protein localises to the cytoplasm. It carries out the reaction Endonucleolytic cleavage to 5'-phosphomonoester.. Its function is as follows. Endonuclease that specifically degrades the RNA of RNA-DNA hybrids. This chain is Ribonuclease H, found in Neorickettsia sennetsu (strain ATCC VR-367 / Miyayama) (Ehrlichia sennetsu).